The chain runs to 529 residues: Bifunctional purine biosynthesis protein PurH (529 aa).

The region spanning 1–148 is the MGS-like domain; that stretch reads MQQRRPIRRA…KNHKDVAIVV (148 aa).

This sequence belongs to the PurH family.

It carries out the reaction (6R)-10-formyltetrahydrofolate + 5-amino-1-(5-phospho-beta-D-ribosyl)imidazole-4-carboxamide = 5-formamido-1-(5-phospho-D-ribosyl)imidazole-4-carboxamide + (6S)-5,6,7,8-tetrahydrofolate. The catalysed reaction is IMP + H2O = 5-formamido-1-(5-phospho-D-ribosyl)imidazole-4-carboxamide. Its pathway is purine metabolism; IMP biosynthesis via de novo pathway; 5-formamido-1-(5-phospho-D-ribosyl)imidazole-4-carboxamide from 5-amino-1-(5-phospho-D-ribosyl)imidazole-4-carboxamide (10-formyl THF route): step 1/1. It functions in the pathway purine metabolism; IMP biosynthesis via de novo pathway; IMP from 5-formamido-1-(5-phospho-D-ribosyl)imidazole-4-carboxamide: step 1/1. The polypeptide is Bifunctional purine biosynthesis protein PurH (Pectobacterium atrosepticum (strain SCRI 1043 / ATCC BAA-672) (Erwinia carotovora subsp. atroseptica)).